The following is a 373-amino-acid chain: Putative aminopeptidase SgcX (373 aa).

2 residues coordinate a divalent metal cation: His67 and Asp180. Glu212 (proton acceptor) is an active-site residue. A divalent metal cation contacts are provided by Glu213, Asp235, and His329.

The protein belongs to the peptidase M42 family. The cofactor is a divalent metal cation.

The protein is Putative aminopeptidase SgcX (sgcX) of Escherichia coli (strain K12).